We begin with the raw amino-acid sequence, 409 residues long: Protein ROOT PRIMORDIUM DEFECTIVE 1 (409 aa).

Residues 47-386 (VRDHGYDNYM…RLAELVLMSP (340 aa)) enclose the PORR domain.

In terms of tissue distribution, expressed in roots, hypocotyls, cotyledons and shoot apex.

Involved in pre-arranging the maintenance of the active cell proliferation during root primordium development. Does not seem to be involved in cell cycle progression. This Arabidopsis thaliana (Mouse-ear cress) protein is Protein ROOT PRIMORDIUM DEFECTIVE 1 (RPD1).